A 372-amino-acid chain; its full sequence is Tryptophan--tRNA ligase (372 aa).

The short motif at 79–87 (PSGKFHFGH) is the 'HIGH' region element. The segment at 247 to 268 (KLQPGLDGRKMSSSRPDSTIFL) is disordered. The 'KMSKS' region motif lies at 256-260 (KMSSS). The span at 257-267 (MSSSRPDSTIF) shows a compositional bias: polar residues.

The protein belongs to the class-I aminoacyl-tRNA synthetase family.

The protein resides in the cytoplasm. The catalysed reaction is tRNA(Trp) + L-tryptophan + ATP = L-tryptophyl-tRNA(Trp) + AMP + diphosphate + H(+). This Aeropyrum pernix (strain ATCC 700893 / DSM 11879 / JCM 9820 / NBRC 100138 / K1) protein is Tryptophan--tRNA ligase.